We begin with the raw amino-acid sequence, 176 residues long: Disulfide bond formation protein B (176 aa).

The Cytoplasmic portion of the chain corresponds to methionine 1–glutamine 11. The chain crosses the membrane as a helical span at residues valine 12 to phenylalanine 28. The Periplasmic segment spans residues leucine 29–isoleucine 46. Cysteine 38 and cysteine 41 are disulfide-bonded. Residues glycine 47–proline 63 traverse the membrane as a helical segment. The Cytoplasmic segment spans residues lysine 64–leucine 70. Residues leucine 71–glycine 88 traverse the membrane as a helical segment. Residues arginine 89–glutamate 145 are Periplasmic-facing. Cysteines 104 and 131 form a disulfide. Residues glutamine 146 to arginine 164 form a helical membrane-spanning segment. Residues isoleucine 165–arginine 176 lie on the Cytoplasmic side of the membrane.

This sequence belongs to the DsbB family.

The protein localises to the cell inner membrane. Its function is as follows. Required for disulfide bond formation in some periplasmic proteins. Acts by oxidizing the DsbA protein. The polypeptide is Disulfide bond formation protein B (Psychrobacter cryohalolentis (strain ATCC BAA-1226 / DSM 17306 / VKM B-2378 / K5)).